The sequence spans 434 residues: Glutamate-1-semialdehyde 2,1-aminomutase 2 (434 aa).

K269 is modified (N6-(pyridoxal phosphate)lysine).

It belongs to the class-III pyridoxal-phosphate-dependent aminotransferase family. HemL subfamily. In terms of assembly, homodimer. Requires pyridoxal 5'-phosphate as cofactor.

Its subcellular location is the cytoplasm. It carries out the reaction (S)-4-amino-5-oxopentanoate = 5-aminolevulinate. It functions in the pathway porphyrin-containing compound metabolism; protoporphyrin-IX biosynthesis; 5-aminolevulinate from L-glutamyl-tRNA(Glu): step 2/2. The chain is Glutamate-1-semialdehyde 2,1-aminomutase 2 from Exiguobacterium sp. (strain ATCC BAA-1283 / AT1b).